Here is a 313-residue protein sequence, read N- to C-terminus: Acetyl-coenzyme A carboxylase carboxyl transferase subunit alpha (313 aa).

One can recognise a CoA carboxyltransferase C-terminal domain in the interval 30 to 291 (DLDREISDLE…KMALLQELAF (262 aa)).

Belongs to the AccA family. Acetyl-CoA carboxylase is a heterohexamer composed of biotin carboxyl carrier protein (AccB), biotin carboxylase (AccC) and two subunits each of ACCase subunit alpha (AccA) and ACCase subunit beta (AccD).

Its subcellular location is the cytoplasm. The enzyme catalyses N(6)-carboxybiotinyl-L-lysyl-[protein] + acetyl-CoA = N(6)-biotinyl-L-lysyl-[protein] + malonyl-CoA. The protein operates within lipid metabolism; malonyl-CoA biosynthesis; malonyl-CoA from acetyl-CoA: step 1/1. Its function is as follows. Component of the acetyl coenzyme A carboxylase (ACC) complex. First, biotin carboxylase catalyzes the carboxylation of biotin on its carrier protein (BCCP) and then the CO(2) group is transferred by the carboxyltransferase to acetyl-CoA to form malonyl-CoA. This chain is Acetyl-coenzyme A carboxylase carboxyl transferase subunit alpha, found in Zymomonas mobilis subsp. mobilis (strain ATCC 31821 / ZM4 / CP4).